The following is a 281-amino-acid chain: Ribosomal RNA small subunit methyltransferase A (281 aa).

Residues asparagine 36, leucine 38, glycine 63, glutamate 84, aspartate 109, and asparagine 127 each contribute to the S-adenosyl-L-methionine site.

This sequence belongs to the class I-like SAM-binding methyltransferase superfamily. rRNA adenine N(6)-methyltransferase family. RsmA subfamily.

It is found in the cytoplasm. The enzyme catalyses adenosine(1518)/adenosine(1519) in 16S rRNA + 4 S-adenosyl-L-methionine = N(6)-dimethyladenosine(1518)/N(6)-dimethyladenosine(1519) in 16S rRNA + 4 S-adenosyl-L-homocysteine + 4 H(+). Its function is as follows. Specifically dimethylates two adjacent adenosines (A1518 and A1519) in the loop of a conserved hairpin near the 3'-end of 16S rRNA in the 30S particle. May play a critical role in biogenesis of 30S subunits. The sequence is that of Ribosomal RNA small subunit methyltransferase A from Borreliella burgdorferi (strain ATCC 35210 / DSM 4680 / CIP 102532 / B31) (Borrelia burgdorferi).